Here is a 65-residue protein sequence, read N- to C-terminus: Large ribosomal subunit protein uL29 (65 aa).

This sequence belongs to the universal ribosomal protein uL29 family.

This is Large ribosomal subunit protein uL29 from Natranaerobius thermophilus (strain ATCC BAA-1301 / DSM 18059 / JW/NM-WN-LF).